Here is an 87-residue protein sequence, read N- to C-terminus: Cytochrome c6 (87 aa).

The heme c site is built by Cys-10, Cys-13, His-14, and Met-56.

The protein belongs to the cytochrome c family. PetJ subfamily. As to quaternary structure, monomer. In terms of processing, binds 1 heme c group covalently per subunit.

It is found in the plastid. It localises to the chloroplast thylakoid lumen. In terms of biological role, functions as an electron carrier between membrane-bound cytochrome b6-f and photosystem I in oxygenic photosynthesis. This Euglena viridis (Cercaria viridis) protein is Cytochrome c6 (petJ).